Reading from the N-terminus, the 101-residue chain is Small ribosomal subunit protein uS10 (101 aa).

Belongs to the universal ribosomal protein uS10 family. In terms of assembly, part of the 30S ribosomal subunit.

Involved in the binding of tRNA to the ribosomes. The protein is Small ribosomal subunit protein uS10 of Mycobacterium bovis (strain ATCC BAA-935 / AF2122/97).